Here is a 584-residue protein sequence, read N- to C-terminus: Long-chain-fatty-acid--AMP ligase FadD23 (584 aa).

Transmembrane regions (helical) follow at residues 199–219 and 225–245; these read YFAD…WLPF and LVLG…TSPV.

It belongs to the ATP-dependent AMP-binding enzyme family.

It localises to the membrane. The catalysed reaction is holo-[(hydroxy)phthioceranic acid synthase] + hexadecanoate + ATP = hexadecanoyl-[(hydroxy)phthioceranic acid synthase] + AMP + diphosphate. It catalyses the reaction holo-[(hydroxy)phthioceranic acid synthase] + octadecanoate + ATP = octadecanoyl-[(hydroxy)phthioceranic acid synthase] + AMP + diphosphate. The protein operates within lipid metabolism; fatty acid biosynthesis. Functionally, catalyzes the activation of long-chain fatty acids as acyl-adenylates (acyl-AMP), which are then transferred to the multifunctional polyketide synthase (PKS) type III for further chain extension. Involved in the biosynthesis of sulfolipid 1 (SL-1). The protein is Long-chain-fatty-acid--AMP ligase FadD23 (fadD23) of Mycobacterium bovis (strain ATCC BAA-935 / AF2122/97).